The chain runs to 494 residues: Glycerol kinase (494 aa).

Threonine 13 is a binding site for ADP. Positions 13, 14, and 15 each coordinate ATP. Threonine 13 is a sn-glycerol 3-phosphate binding site. Arginine 17 provides a ligand contact to ADP. The sn-glycerol 3-phosphate site is built by arginine 83, glutamate 84, tyrosine 135, and aspartate 244. Positions 83, 84, 135, 244, and 245 each coordinate glycerol. ADP contacts are provided by threonine 266 and glycine 309. ATP contacts are provided by threonine 266, glycine 309, glutamine 313, and glycine 410. 2 residues coordinate ADP: glycine 410 and asparagine 414.

The protein belongs to the FGGY kinase family.

The enzyme catalyses glycerol + ATP = sn-glycerol 3-phosphate + ADP + H(+). Its pathway is polyol metabolism; glycerol degradation via glycerol kinase pathway; sn-glycerol 3-phosphate from glycerol: step 1/1. With respect to regulation, inhibited by fructose 1,6-bisphosphate (FBP). Key enzyme in the regulation of glycerol uptake and metabolism. Catalyzes the phosphorylation of glycerol to yield sn-glycerol 3-phosphate. This Shewanella oneidensis (strain ATCC 700550 / JCM 31522 / CIP 106686 / LMG 19005 / NCIMB 14063 / MR-1) protein is Glycerol kinase.